The primary structure comprises 667 residues: MSLTNLFKLQSSLKPSGDQPQAIQKLVNNFKQGLKEQILLGATGTGKTFTIANIIQHLQQKTLVIAHNKTLAGQLYNELKAMFPNNRVEYFISYYDYYQPEAYVASSDTYIEKDSKINDEIDQLRHSAAGSLINRDDVIVVASVSCIYGVGDLKDYQKSTLHLQIGDKYERKNLINKLIELKYQRNEINFQRGTFRVRGDIIEIIASSSKEIGIRIIFFGNEIENIQNFYVLNGKAIANLKLITLFPASLYATNNQKLQESIKRIRQELKEQINHFEKTNQLLAAQKIKMRTLHDLEMLEQIGNCNGVENYSRHLALKGKGEAPSTLIDFFGNDFLTIVDESHVTIPQIKGMYFGDFSRKNNLVNFGFRLPSALDNRPLKFNEFQEKMNKVIYLSATPGDYELTKKIPIVEQIIRPTFVLDPEIEVRPTNNQMDDLYFEIKHQTKNNQRILITTLTINMSEDLTTYLKNLGIKVAYLHSEIKSLQRLEILKDLRLGKYDCLVGVNLLREGLDLPEVALVAILDADKQGFLRNERSLIQTIGRAARNITGKAIMYADCISPAMQIAIEETYRRRKIQKQYNETMKVTPTALNKTILETISIKQKERIKNEKGKSKVQKKLQINTNMTAKNKEIKRLQKTMKEAAKALDFEKAATLRDLILDLEKKEKR.

Residues 28 to 185 enclose the Helicase ATP-binding domain; it reads NNFKQGLKEQ…NKLIELKYQR (158 aa). 41 to 48 is an ATP binding site; sequence GATGTGKT. Residues 94–117 carry the Beta-hairpin motif; sequence YYDYYQPEAYVASSDTYIEKDSKI. The Helicase C-terminal domain maps to 432–594; sequence QMDDLYFEIK…VTPTALNKTI (163 aa). In terms of domain architecture, UVR spans 629-664; sequence NKEIKRLQKTMKEAAKALDFEKAATLRDLILDLEKK.

This sequence belongs to the UvrB family. Forms a heterotetramer with UvrA during the search for lesions. Interacts with UvrC in an incision complex.

The protein resides in the cytoplasm. In terms of biological role, the UvrABC repair system catalyzes the recognition and processing of DNA lesions. A damage recognition complex composed of 2 UvrA and 2 UvrB subunits scans DNA for abnormalities. Upon binding of the UvrA(2)B(2) complex to a putative damaged site, the DNA wraps around one UvrB monomer. DNA wrap is dependent on ATP binding by UvrB and probably causes local melting of the DNA helix, facilitating insertion of UvrB beta-hairpin between the DNA strands. Then UvrB probes one DNA strand for the presence of a lesion. If a lesion is found the UvrA subunits dissociate and the UvrB-DNA preincision complex is formed. This complex is subsequently bound by UvrC and the second UvrB is released. If no lesion is found, the DNA wraps around the other UvrB subunit that will check the other stand for damage. This is UvrABC system protein B from Aster yellows witches'-broom phytoplasma (strain AYWB).